The sequence spans 163 residues: NADH-quinone oxidoreductase subunit 9 (163 aa).

4Fe-4S ferredoxin-type domains follow at residues 54–84 (LRRYPNGEERCIACKLCEAVCPAQAITIDAE) and 94–123 (TRYDIDMTKCIYCGFCQEACPVDAIVEGPN). [4Fe-4S] cluster is bound by residues C64, C67, C70, C74, C103, C106, C109, and C113.

Belongs to the complex I 23 kDa subunit family. As to quaternary structure, NDH-1 is composed of at least 14 different subunits, Nqo1 to Nqo14. The complex has a L-shaped structure, with the hydrophobic arm (subunits Nqo7, Nqo8, Nqo10 to Nqo14) embedded in the inner membrane and the hydrophilic peripheral arm (subunits Nqo1 to Nqo6, Nqo9) protruding into the bacterial cytoplasm. The hydrophilic domain contains all the redox centers. The cofactor is [4Fe-4S] cluster.

It is found in the cell inner membrane. It carries out the reaction a quinone + NADH + 5 H(+)(in) = a quinol + NAD(+) + 4 H(+)(out). In terms of biological role, NDH-1 shuttles electrons from NADH, via FMN and iron-sulfur (Fe-S) centers, to quinones in the respiratory chain. The immediate electron acceptor for the enzyme in this species is believed to be ubiquinone. Couples the redox reaction to proton translocation (for every two electrons transferred, four hydrogen ions are translocated across the cytoplasmic membrane), and thus conserves the redox energy in a proton gradient. In Paracoccus denitrificans, this protein is NADH-quinone oxidoreductase subunit 9.